The chain runs to 139 residues: Putative pre-16S rRNA nuclease (139 aa).

It belongs to the YqgF nuclease family.

It is found in the cytoplasm. Its function is as follows. Could be a nuclease involved in processing of the 5'-end of pre-16S rRNA. The polypeptide is Putative pre-16S rRNA nuclease (Streptococcus uberis (strain ATCC BAA-854 / 0140J)).